The following is a 247-amino-acid chain: Putative trypsin-6 (247 aa).

The N-terminal stretch at methionine 1 to alanine 15 is a signal peptide. The region spanning isoleucine 24–alanine 244 is the Peptidase S1 domain. A disulfide bridge connects residues cysteine 48 and cysteine 64. Histidine 63 (charge relay system) is an active-site residue. Positions 75, 77, 80, and 85 each coordinate Ca(2+). Aspartate 107 acts as the Charge relay system in catalysis. Intrachain disulfides connect cysteine 139–cysteine 206, cysteine 171–cysteine 185, and cysteine 196–cysteine 220. Residue serine 200 is the Charge relay system of the active site.

It belongs to the peptidase S1 family. Tryptase subfamily. In terms of tissue distribution, overexpressed in metastasing in non small cell lung tumors, leading to an enhanced cell migration.

The protein resides in the secreted. The catalysed reaction is Preferential cleavage: Arg-|-Xaa, Lys-|-Xaa.. May regulate cell migration. The chain is Putative trypsin-6 (PRSS3P2) from Homo sapiens (Human).